The primary structure comprises 328 residues: Malate dehydrogenase (328 aa).

12 to 18 contributes to the NAD(+) binding site; the sequence is GAAGQIA. Substrate-binding residues include Arg-93 and Arg-99. NAD(+) is bound by residues Asn-106, Gln-113, and 130–132; that span reads VGN. 2 residues coordinate substrate: Asn-132 and Arg-163. His-188 acts as the Proton acceptor in catalysis.

It belongs to the LDH/MDH superfamily. MDH type 2 family.

It carries out the reaction (S)-malate + NAD(+) = oxaloacetate + NADH + H(+). Its function is as follows. Catalyzes the reversible oxidation of malate to oxaloacetate. This Burkholderia lata (strain ATCC 17760 / DSM 23089 / LMG 22485 / NCIMB 9086 / R18194 / 383) protein is Malate dehydrogenase.